The following is a 341-amino-acid chain: UPF0324 membrane protein SMU_2059c (341 aa).

Transmembrane regions (helical) follow at residues 7–24 (KLSG…AWFL), 28–47 (FPLV…LAIF), 68–85 (FAVV…VLTV), 90–107 (LPII…AFLL), 120–142 (LVGV…VIQA), 147–169 (IAQS…PTLG), 178–200 (GFAL…AAAW), 211–233 (GATI…LSFY), 254–276 (VFPM…TALG), 291–310 (FCIV…VKLV), and 317–339 (IVLG…HLLG).

Belongs to the UPF0324 family.

Its subcellular location is the cell membrane. In Streptococcus mutans serotype c (strain ATCC 700610 / UA159), this protein is UPF0324 membrane protein SMU_2059c.